Reading from the N-terminus, the 122-residue chain is MSLTNEQIIEAIASKSVTEIVELIAAMEEKFGVSAAAAAVAVAAGPAEAAEEKTEFDVVLAGAGANKVAVIKAVRGATGLGLKEAKDLVESAPAVLKEGISKAEAEALKKELEEAGAQVEVK.

This sequence belongs to the bacterial ribosomal protein bL12 family. As to quaternary structure, homodimer. Part of the ribosomal stalk of the 50S ribosomal subunit. Forms a multimeric L10(L12)X complex, where L10 forms an elongated spine to which 2 to 4 L12 dimers bind in a sequential fashion. Binds GTP-bound translation factors.

In terms of biological role, forms part of the ribosomal stalk which helps the ribosome interact with GTP-bound translation factors. Is thus essential for accurate translation. The protein is Large ribosomal subunit protein bL12 of Pasteurella multocida (strain Pm70).